Here is a 386-residue protein sequence, read N- to C-terminus: Galactokinase (386 aa).

Residue 35 to 38 (EHTD) participates in substrate binding. ATP is bound by residues Ser-69 and 125-131 (GAGLSSS). The Mg(2+) site is built by Ser-131 and Glu-163. Asp-175 acts as the Proton acceptor in catalysis. Tyr-224 is a binding site for substrate.

It belongs to the GHMP kinase family. GalK subfamily.

The protein localises to the cytoplasm. The catalysed reaction is alpha-D-galactose + ATP = alpha-D-galactose 1-phosphate + ADP + H(+). Its pathway is carbohydrate metabolism; galactose metabolism. Its function is as follows. Catalyzes the transfer of the gamma-phosphate of ATP to D-galactose to form alpha-D-galactose-1-phosphate (Gal-1-P). The polypeptide is Galactokinase (Vibrio parahaemolyticus serotype O3:K6 (strain RIMD 2210633)).